We begin with the raw amino-acid sequence, 66 residues long: Large ribosomal subunit protein bL32 (66 aa).

Residues 1–20 (MAVPKRRKSKSKVRTKRAHH) are disordered.

The protein belongs to the bacterial ribosomal protein bL32 family.

This chain is Large ribosomal subunit protein bL32, found in Leptospira borgpetersenii serovar Hardjo-bovis (strain JB197).